The following is a 247-amino-acid chain: Probable chemoreceptor glutamine deamidase CheD (247 aa).

The segment at 204–247 (KRPAAPQPARPRIELFGGRGTTPGAGSQAAGSPYAANLSRKQEA) is disordered.

Belongs to the CheD family.

The catalysed reaction is L-glutaminyl-[protein] + H2O = L-glutamyl-[protein] + NH4(+). Probably deamidates glutamine residues to glutamate on methyl-accepting chemotaxis receptors (MCPs), playing an important role in chemotaxis. This Burkholderia orbicola (strain MC0-3) protein is Probable chemoreceptor glutamine deamidase CheD.